Reading from the N-terminus, the 173-residue chain is Probable glutathione peroxidase 5 (173 aa).

The N-myristoyl glycine moiety is linked to residue G2. C46 is a catalytic residue.

This sequence belongs to the glutathione peroxidase family. In terms of tissue distribution, ubiquitous.

It is found in the cell membrane. The catalysed reaction is 2 glutathione + H2O2 = glutathione disulfide + 2 H2O. In terms of biological role, may constitute a glutathione peroxidase-like protective system against oxidative stresses. In Arabidopsis thaliana (Mouse-ear cress), this protein is Probable glutathione peroxidase 5 (GPX5).